The chain runs to 64 residues: Large ribosomal subunit protein eL37 (64 aa).

Zn(2+)-binding residues include Cys20, Cys23, Cys35, and Cys38. The segment at 20–38 adopts a C4-type zinc-finger fold; that stretch reads CRRCGRRSFHVRKKVCAAC.

It belongs to the eukaryotic ribosomal protein eL37 family. Requires Zn(2+) as cofactor.

In terms of biological role, binds to the 23S rRNA. This Methanococcus maripaludis (strain C5 / ATCC BAA-1333) protein is Large ribosomal subunit protein eL37.